We begin with the raw amino-acid sequence, 931 residues long: Beta-mannosidase A (931 aa).

The signal sequence occupies residues M1 to G21. Residues N40, N79, N247, N282, and N347 are each glycosylated (N-linked (GlcNAc...) asparagine). E479 (proton donor) is an active-site residue. Residues N550, N608, N658, N738, N790, N798, N830, and N918 are each glycosylated (N-linked (GlcNAc...) asparagine).

The protein belongs to the glycosyl hydrolase 2 family. Beta-mannosidase A subfamily. As to quaternary structure, homodimer. In terms of processing, N-glycosylated.

Its subcellular location is the secreted. The catalysed reaction is Hydrolysis of terminal, non-reducing beta-D-mannose residues in beta-D-mannosides.. It functions in the pathway glycan metabolism; N-glycan degradation. Functionally, exoglycosidase that cleaves the single beta-linked mannose residue from the non-reducing end of beta-mannosidic oligosaccharides of various complexity and length. Involved in the degradation of polymeric mannan and galactomannan. Releases the terminal mannose residue from mannobiose and mannotriose, as well as from galactosyl-mannobiose (GM2), galactosyl-mannotriose (GM3) and di-galactosyl-mannopentaose (G2M5). The sequence is that of Beta-mannosidase A (mndA) from Aspergillus niger.